Reading from the N-terminus, the 79-residue chain is Hematopoietic cell signal transducer (79 aa).

The first 18 residues, 1 to 18 (MIHPGHILFLLLLPVAAA), serve as a signal peptide directing secretion. At 19 to 34 (QTTPGSCSGCGSLSLP) the chain is on the extracellular side. The helical transmembrane segment at 35–55 (LLAGLVAADAVASPLIVGAVF) threads the bilayer. Over 56–79 (LCARPRRSPAQGDGKVYINMPGRG) the chain is Cytoplasmic. Phosphotyrosine is present on Tyr-72. Residues 72-74 (YIN) are GRB2 binding site. Positions 72–75 (YINM) are PIK3R1 binding site.

The protein belongs to the DAP10 family. Homodimer; Disulfide-linked. Heterohexamer composed of four subunits of HCST/DAP10 and two subunits of KLRK1. Interacts (via transmembrane domain) with KLRK1 (via transmembrane domain); the interaction is required for KLRK1 NK cell surface and induces NK cell-mediated cytotoxicity. Interacts with PIK3R1 and GRB2. Interacts with CLEC5A. Forms an CLEC5A/TYROBP/HCST trimolecular complex depending almost solely on TYROBP. Interacts with CD300H. In terms of processing, phosphorylated; PIK3R1 and GRB2 associate specifically with tyrosine-phosphorylated HCST. O-glycosylated.

The protein resides in the membrane. Transmembrane adapter protein which associates with KLRK1 to form an activation receptor KLRK1-HCST in lymphoid and myeloid cells; this receptor plays a major role in triggering cytotoxicity against target cells expressing cell surface ligands such as MHC class I chain-related MICA and MICB, and UL16-binding proteins (ULBPs); these ligands are up-regulated by stress conditions and pathological state such as viral infection and tumor transformation. Functions as a docking site for PI3-kinase PIK3R1 and GRB2. Interaction of ULBPs with KLRK1-HCST triggers calcium mobilization and activation of the PIK3R1, MAP2K/ERK, and JAK2/STAT5 signaling pathways. Both PIK3R1 and GRB2 are required for full KLRK1-HCST-mediated activation and ultimate killing of target cells. In NK cells, KLRK1-HCST signaling directly induces cytotoxicity and enhances cytokine production initiated via DAP12/TYROBP-associated receptors. In T-cells, it provides primarily costimulation for TCR-induced signals. KLRK1-HCST receptor plays a role in immune surveillance against tumors and is required for cytolysis of tumors cells; indeed, melanoma cells that do not express KLRK1 ligands escape from immune surveillance mediated by NK cells. This chain is Hematopoietic cell signal transducer (HCST), found in Macaca mulatta (Rhesus macaque).